The primary structure comprises 506 residues: Probable Xaa-Pro aminopeptidase PAAG_05466 (506 aa).

Aspartate 285, aspartate 296, glutamate 433, and glutamate 471 together coordinate Mn(2+).

It belongs to the peptidase M24B family. Mn(2+) serves as cofactor.

The catalysed reaction is Release of any N-terminal amino acid, including proline, that is linked to proline, even from a dipeptide or tripeptide.. Its function is as follows. Catalyzes the removal of a penultimate prolyl residue from the N-termini of peptides. The chain is Probable Xaa-Pro aminopeptidase PAAG_05466 from Paracoccidioides lutzii (strain ATCC MYA-826 / Pb01) (Paracoccidioides brasiliensis).